The chain runs to 361 residues: MPLKLALPRSTTPKDPARCTLDIRMESPPLVFLGSPETSSGALASGILKLTILHQPFIKVHTLKLQLIKRITVLHPAISHCSACAGSKEVLQTWDLAANTTYRPGTQHWPFSWLFPGSLPASVSNRYIKLEYYLEATLCYGTPEGGISPSKPEVLKFPLQLKRAAIPSPDTIHKRIFPPTNLVANITLPSTLHPHGAALMEVTMTGFAQNDGNDWKINRVTWRLEEHMQFSCQPCERHRDLVKPRPIEEKRILSTQDLQSGWKFIDNQMFLSTQINTSSLREPSCDVEIPAPFSLKVSHHLIFETIVNRKKNVAGNNMGNARILRVSVVQPLTTPAGLGISWDEECPPVFESVGPAPPAYT.

Threonine 12 is modified (phosphothreonine).

It localises to the cytoplasm. The protein resides in the nucleus. This is an uncharacterized protein from Schizosaccharomyces pombe (strain 972 / ATCC 24843) (Fission yeast).